We begin with the raw amino-acid sequence, 168 residues long: Cell division inhibitor SulA (168 aa).

The segment at 105–111 is ftsZ binding; it reads ALETGNY. Residues 161–168 form a lon protease binding region; sequence RIHSRMVH.

Belongs to the SulA family. Interacts with FtsZ. Post-translationally, is rapidly cleaved and degraded by the Lon protease once DNA damage is repaired.

Functionally, component of the SOS system and an inhibitor of cell division. Accumulation of SulA causes rapid cessation of cell division and the appearance of long, non-septate filaments. In the presence of GTP, binds a polymerization-competent form of FtsZ in a 1:1 ratio, thus inhibiting FtsZ polymerization and therefore preventing it from participating in the assembly of the Z ring. This mechanism prevents the premature segregation of damaged DNA to daughter cells during cell division. This Cronobacter turicensis (strain DSM 18703 / CCUG 55852 / LMG 23827 / z3032) protein is Cell division inhibitor SulA.